The sequence spans 863 residues: NACHT, LRR and PYD domains-containing protein 4B (863 aa).

The Pyrin domain occupies 1–93; that stretch reads MASLFSDFGF…TNRATGEIAA (93 aa). The NACHT domain maps to 143–466; that stretch reads KMVVLQGVAG…FYLLHSEMDH (324 aa). Residue 149-156 coordinates ATP; that stretch reads GVAGIGKT. 7 LRR repeats span residues 618 to 643, 683 to 706, 717 to 740, 741 to 763, 765 to 782, 797 to 824, and 843 to 863; these read WHQI…IFNE, SYNL…MLCD, ILDL…LRQN, KSLR…ALCR, LTLP…ACQL, YKCL…AMKD, and SQEF…ENGV.

Belongs to the NLRP family.

In terms of biological role, may be involved in inflammation and recognition of cytosolic pathogen-associated molecular patterns (PAMPs) not intercepted by membrane-bound receptors. This is NACHT, LRR and PYD domains-containing protein 4B (Nlrp4b) from Mus musculus (Mouse).